The sequence spans 1115 residues: G-protein coupled receptor GRL101 (1115 aa).

An N-terminal signal peptide occupies residues 1 to 24 (MATMSGTTIVCLIYLTTMLGNSQG). Topologically, residues 25-767 (VNLKIESPSP…SCEDLMSNHV (743 aa)) are extracellular. LDL-receptor class A domains are found at residues 36-79 (TLCS…TCGC), 77-115 (CGCL…ECDI), 116-155 (YICP…ICER), 156-196 (RECV…ACDS), 195-232 (DSDK…NCKL), 231-269 (KLCD…VCAN), 272-318 (YGCP…YCSN), 320-363 (SECK…SCLA), 365-403 (PKCS…NCEN), 404-442 (HQCA…DCDP), 444-485 (PVCE…NCSQ), and 486-525 (HICL…NCRY). Disulfide bonds link cysteine 38/cysteine 53, cysteine 46/cysteine 66, cysteine 60/cysteine 77, cysteine 79/cysteine 91, cysteine 86/cysteine 104, cysteine 98/cysteine 113, cysteine 118/cysteine 131, cysteine 138/cysteine 153, cysteine 158/cysteine 170, cysteine 165/cysteine 183, cysteine 177/cysteine 194, cysteine 202/cysteine 220, cysteine 214/cysteine 230, cysteine 233/cysteine 245, cysteine 240/cysteine 258, and cysteine 252/cysteine 267. N-linked (GlcNAc...) asparagine glycosylation occurs at asparagine 87. An N-linked (GlcNAc...) asparagine glycan is attached at asparagine 166. N-linked (GlcNAc...) asparagine glycosylation occurs at asparagine 269. 3 disulfides stabilise this stretch: cysteine 274–cysteine 291, cysteine 282–cysteine 304, and cysteine 298–cysteine 316. An N-linked (GlcNAc...) asparagine glycan is attached at asparagine 318. Cystine bridges form between cysteine 322/cysteine 339, cysteine 334/cysteine 352, cysteine 346/cysteine 361, cysteine 367/cysteine 379, cysteine 374/cysteine 392, cysteine 386/cysteine 401, cysteine 406/cysteine 418, cysteine 413/cysteine 431, cysteine 425/cysteine 440, cysteine 446/cysteine 458, cysteine 453/cysteine 474, cysteine 465/cysteine 483, cysteine 488/cysteine 500, cysteine 495/cysteine 513, and cysteine 507/cysteine 523. A glycan (N-linked (GlcNAc...) asparagine) is linked at asparagine 482. Asparagine 502 carries an N-linked (GlcNAc...) asparagine glycan. Residues 518-562 (WDENNCRYWCPHGQAICQCEGVTMDCTGQKLKEMPVQQMEEDLSK) form the LRRNT domain. Asparagine 571 carries N-linked (GlcNAc...) asparagine glycosylation. LRR repeat units follow at residues 584-605 (KVTY…SFQN), 608-629 (KLTH…SLLG), 632-653 (NLKQ…TFSS), 656-677 (HLTV…MFKG), 680-701 (QITV…AFNN), and 704-725 (NVRL…VFMG). N-linked (GlcNAc...) asparagine glycans are attached at residues asparagine 618 and asparagine 624. Asparagine 685 is a glycosylation site (N-linked (GlcNAc...) asparagine). The helical transmembrane segment at 768 to 788 (LRVSIWVLGVIALVGNFVVIF) threads the bilayer. At 789-801 (WRVRDFRGGKVHS) the chain is on the cytoplasmic side. A helical transmembrane segment spans residues 802-822 (FLITNLAIGDFLMGVYLLIIA). Topologically, residues 823 to 857 (TADTYYRGVYISHDENWKQSGLCQFAGFVSTFSSE) are extracellular. Residues 858–878 (LSVLTLSTITLDRLICILFPL) form a helical membrane-spanning segment. Residues 879 to 887 (RRTRLGLRQ) lie on the Cytoplasmic side of the membrane. Residues 888 to 908 (AIIVMSCIWVLVFLLAVLPLL) traverse the membrane as a helical segment. The Extracellular segment spans residues 909–941 (GFSYFENFYGRSGVCLALHVTPDRRPGWEYSVG). The chain crosses the membrane as a helical span at residues 942-962 (VFILLNLLSFVLIASSYLWMF). At 963–988 (SVAKKTRSAVRTAESKNDNAMARRMT) the chain is on the cytoplasmic side. A helical transmembrane segment spans residues 989-1009 (LIVMTDFCCWVPIIVLGFVSL). Over 1010 to 1017 (AGARADDQ) the chain is Extracellular. Residues 1018–1038 (VYAWIAVFVLPLNSATNPVIY) traverse the membrane as a helical segment. Over 1039–1115 (TLSTAPFLGN…YYNTELHSDS (77 aa)) the chain is Cytoplasmic.

It belongs to the G-protein coupled receptor 1 family. Predominantly expressed in a small number of neurons within the central nervous system and to a lesser extent in the heart.

The protein localises to the cell membrane. Might directly transduce signals carried by large extracellular lipoprotein complexes into neuronal events. This Lymnaea stagnalis (Great pond snail) protein is G-protein coupled receptor GRL101.